The chain runs to 253 residues: 3-deoxy-manno-octulosonate cytidylyltransferase (253 aa).

Belongs to the KdsB family.

The protein localises to the cytoplasm. It catalyses the reaction 3-deoxy-alpha-D-manno-oct-2-ulosonate + CTP = CMP-3-deoxy-beta-D-manno-octulosonate + diphosphate. It functions in the pathway nucleotide-sugar biosynthesis; CMP-3-deoxy-D-manno-octulosonate biosynthesis; CMP-3-deoxy-D-manno-octulosonate from 3-deoxy-D-manno-octulosonate and CTP: step 1/1. Its pathway is bacterial outer membrane biogenesis; lipopolysaccharide biosynthesis. In terms of biological role, activates KDO (a required 8-carbon sugar) for incorporation into bacterial lipopolysaccharide in Gram-negative bacteria. The sequence is that of 3-deoxy-manno-octulosonate cytidylyltransferase from Neisseria meningitidis serogroup B (strain ATCC BAA-335 / MC58).